Here is a 244-residue protein sequence, read N- to C-terminus: 6-carboxyhexanoate--CoA ligase (244 aa).

Belongs to the BioW family. In terms of assembly, homodimer. Mg(2+) is required as a cofactor.

It catalyses the reaction heptanedioate + ATP + CoA = 6-carboxyhexanoyl-CoA + AMP + diphosphate. The protein operates within metabolic intermediate metabolism; pimeloyl-CoA biosynthesis; pimeloyl-CoA from pimelate: step 1/1. Its function is as follows. Catalyzes the transformation of pimelate into pimeloyl-CoA with concomitant hydrolysis of ATP to AMP. This is 6-carboxyhexanoate--CoA ligase from Hydrogenobacter thermophilus (strain DSM 6534 / IAM 12695 / TK-6).